The chain runs to 249 residues: 5'-nucleotidase SurE (249 aa).

The a divalent metal cation site is built by Asp-8, Asp-9, Ser-39, and Asn-91.

The protein belongs to the SurE nucleotidase family. It depends on a divalent metal cation as a cofactor.

It is found in the cytoplasm. The enzyme catalyses a ribonucleoside 5'-phosphate + H2O = a ribonucleoside + phosphate. In terms of biological role, nucleotidase that shows phosphatase activity on nucleoside 5'-monophosphates. This is 5'-nucleotidase SurE from Pseudomonas fluorescens (strain Pf0-1).